The following is a 277-amino-acid chain: Orotidine 5'-phosphate decarboxylase (277 aa).

Residues Asp40, 62 to 64 (KTH), 93 to 102 (DRKFIDIGNT), Tyr229, and Arg247 each bind substrate. Lys95 (proton donor) is an active-site residue.

Belongs to the OMP decarboxylase family.

It carries out the reaction orotidine 5'-phosphate + H(+) = UMP + CO2. It participates in pyrimidine metabolism; UMP biosynthesis via de novo pathway; UMP from orotate: step 2/2. The sequence is that of Orotidine 5'-phosphate decarboxylase (pyrG) from Aspergillus oryzae (strain ATCC 42149 / RIB 40) (Yellow koji mold).